A 134-amino-acid polypeptide reads, in one-letter code: Large ribosomal subunit protein uL14 (134 aa).

It belongs to the universal ribosomal protein uL14 family. In the 70S ribosome, L14 and L19 interact and together make contacts with the 16S rRNA in bridges B5 and B8. Part of the 50S ribosomal subunit. Forms a cluster with proteins L3 and L19.

Functionally, forms part of two intersubunit bridges in the 70S ribosome. Binds to 23S rRNA. This is Large ribosomal subunit protein uL14 from Deinococcus radiodurans (strain ATCC 13939 / DSM 20539 / JCM 16871 / CCUG 27074 / LMG 4051 / NBRC 15346 / NCIMB 9279 / VKM B-1422 / R1).